The primary structure comprises 147 residues: Hemoglobin subunit gamma-2 (147 aa).

Residues 3–147 form the Globin domain; that stretch reads HFTEEDKATI…VASALSSRYH (145 aa). T13 bears the Phosphothreonine mark. 3 positions are modified to phosphoserine: S45, S51, and S53. K60 carries the N6-acetyllysine modification. H64 is a binding site for heme b. K83 is subject to N6-acetyllysine. H93 is a heme b binding site. C94 is subject to S-nitrosocysteine. Residues S140, S143, and S144 each carry the phosphoserine modification.

This sequence belongs to the globin family. As to quaternary structure, heterotetramer of two alpha chains and two gamma chains in fetal hemoglobin (Hb F). In terms of tissue distribution, red blood cells.

Its function is as follows. Gamma chains make up the fetal hemoglobin F, in combination with alpha chains. The protein is Hemoglobin subunit gamma-2 (HBG2) of Hylobates lar (Lar gibbon).